Reading from the N-terminus, the 97-residue chain is Putative pterin-4-alpha-carbinolamine dehydratase (97 aa).

The protein belongs to the pterin-4-alpha-carbinolamine dehydratase family.

The catalysed reaction is (4aS,6R)-4a-hydroxy-L-erythro-5,6,7,8-tetrahydrobiopterin = (6R)-L-erythro-6,7-dihydrobiopterin + H2O. This Christiangramia forsetii (strain DSM 17595 / CGMCC 1.15422 / KT0803) (Gramella forsetii) protein is Putative pterin-4-alpha-carbinolamine dehydratase.